Consider the following 483-residue polypeptide: General transcription factor IIH subunit 4 (483 aa).

Positions 93–117 (PQQQQSSQQSSSQQQQQQQQQQQQT) are disordered. Residues 94–116 (QQQQSSQQSSSQQQQQQQQQQQQ) are compositionally biased toward low complexity.

It belongs to the TFB2 family. Component of the 7-subunit TFIIH core complex composed of XPB/repB, XPD/repD, gtf2h1, gtf2h2, gtf2h3, gtf2h4 and gtf2h5, which is active in NER. The core complex associates with the 3-subunit CDK-activating kinase (CAK) module composed of cycH/cyclin H, cdk7 and mnat1 to form the 10-subunit holoenzyme (holo-TFIIH) active in transcription.

Its subcellular location is the nucleus. Its function is as follows. Component of the general transcription and DNA repair factor IIH (TFIIH) core complex, which is involved in general and transcription-coupled nucleotide excision repair (NER) of damaged DNA and, when complexed to CAK, in RNA transcription by RNA polymerase II. In NER, TFIIH acts by opening DNA around the lesion to allow the excision of the damaged oligonucleotide and its replacement by a new DNA fragment. In transcription, TFIIH has an essential role in transcription initiation. When the pre-initiation complex (PIC) has been established, TFIIH is required for promoter opening and promoter escape. Phosphorylation of the C-terminal tail (CTD) of the largest subunit of RNA polymerase II by the kinase module CAK controls the initiation of transcription. The sequence is that of General transcription factor IIH subunit 4 (gtf2h4) from Dictyostelium discoideum (Social amoeba).